The chain runs to 430 residues: Adenylosuccinate synthetase (430 aa).

GTP is bound by residues 11-17 (GDEGKGK) and 39-41 (GHT). Asp12 (proton acceptor) is an active-site residue. Mg(2+) is bound by residues Asp12 and Gly39. Residues 12–15 (DEGK), 37–40 (NAGH), Thr130, Arg144, Asn226, Thr241, and Arg305 contribute to the IMP site. The active-site Proton donor is His40. 301-307 (VTTGRKR) is a substrate binding site. GTP-binding positions include Arg307, 333-335 (KLD), and 415-417 (GTG).

It belongs to the adenylosuccinate synthetase family. As to quaternary structure, homodimer. Mg(2+) is required as a cofactor.

The protein localises to the cytoplasm. It carries out the reaction IMP + L-aspartate + GTP = N(6)-(1,2-dicarboxyethyl)-AMP + GDP + phosphate + 2 H(+). It participates in purine metabolism; AMP biosynthesis via de novo pathway; AMP from IMP: step 1/2. In terms of biological role, plays an important role in the de novo pathway and in the salvage pathway of purine nucleotide biosynthesis. Catalyzes the first committed step in the biosynthesis of AMP from IMP. In Scheffersomyces stipitis (strain ATCC 58785 / CBS 6054 / NBRC 10063 / NRRL Y-11545) (Yeast), this protein is Adenylosuccinate synthetase.